A 110-amino-acid polypeptide reads, in one-letter code: uncharacterized protein (110 aa).

The protein resides in the mitochondrion. This is an uncharacterized protein from Arabidopsis thaliana (Mouse-ear cress).